Consider the following 258-residue polypeptide: ATP synthase subunit a (258 aa).

The next 5 helical transmembrane spans lie at 38–58, 94–114, 118–138, 193–213, and 215–235; these read KPVWFLWLGAAITFLFMYVGA, WFPYSLTLFIFLLVLNIIGLF, YPVTSNISFTATLALFTFVLT, ILAGHLIIFVFLSLILYFGLP, and AFVSVPFAVVFYAFEIFVAVI.

Belongs to the ATPase A chain family. In terms of assembly, F-type ATPases have 2 components, CF(1) - the catalytic core - and CF(0) - the membrane proton channel. CF(1) has five subunits: alpha(3), beta(3), gamma(1), delta(1), epsilon(1). CF(0) has three main subunits: a(1), b(2) and c(9-12). The alpha and beta chains form an alternating ring which encloses part of the gamma chain. CF(1) is attached to CF(0) by a central stalk formed by the gamma and epsilon chains, while a peripheral stalk is formed by the delta and b chains.

The protein resides in the cell membrane. Its function is as follows. Key component of the proton channel; it plays a direct role in the translocation of protons across the membrane. This chain is ATP synthase subunit a, found in Rubrobacter xylanophilus (strain DSM 9941 / JCM 11954 / NBRC 16129 / PRD-1).